The sequence spans 97 residues: Putative membrane protein insertion efficiency factor (97 aa).

The protein belongs to the UPF0161 family.

It localises to the cell membrane. Could be involved in insertion of integral membrane proteins into the membrane. This Lactobacillus johnsonii (strain CNCM I-12250 / La1 / NCC 533) protein is Putative membrane protein insertion efficiency factor.